A 364-amino-acid chain; its full sequence is Triacylglycerol lipase (364 aa).

The first 44 residues, 1 to 44 (MARTMRSRVVAGAVACAMSIAPFAGTTAVMTLATTHAAMAATAP), serve as a signal peptide directing secretion. Residues 54–266 (PIILVHGLSG…AIQPTLSVFG (213 aa)) form the AB hydrolase-1 domain. Leu61 provides a ligand contact to substrate. Ser131 serves as the catalytic Nucleophile. Position 132 (Gln132) interacts with substrate. Residues Cys234 and Cys314 are joined by a disulfide bond. Asp286 contacts Ca(2+). Catalysis depends on charge relay system residues Asp308 and His330. Ca(2+) contacts are provided by Asp332, Gln336, and Val340.

Belongs to the AB hydrolase superfamily. Pseudomonas lipase family. In terms of assembly, monomer. It depends on Ca(2+) as a cofactor.

The protein resides in the secreted. It catalyses the reaction a triacylglycerol + H2O = a diacylglycerol + a fatty acid + H(+). With respect to regulation, inhibited by RC-(Rp,Sp)- and SC-(Rp,Sp)-1,2-dioctylcarbamoylglycero-3-O-p-nitrophenyl octylphosphonate. Also inhibited by diethyl-p-nitrophenylphosphate (E600). Catalyzes the hydrolysis of triacylglycerol. It shows a preference for triacylglycerols with a chain length between 6 and 12 carbons. In Burkholderia cepacia (Pseudomonas cepacia), this protein is Triacylglycerol lipase.